We begin with the raw amino-acid sequence, 166 residues long: 3-isopropylmalate dehydratase small subunit 1 (166 aa).

Belongs to the LeuD family. LeuD type 2 subfamily. In terms of assembly, heterodimer of LeuC and LeuD.

It catalyses the reaction (2R,3S)-3-isopropylmalate = (2S)-2-isopropylmalate. The protein operates within amino-acid biosynthesis; L-leucine biosynthesis; L-leucine from 3-methyl-2-oxobutanoate: step 2/4. In terms of biological role, catalyzes the isomerization between 2-isopropylmalate and 3-isopropylmalate, via the formation of 2-isopropylmaleate. The protein is 3-isopropylmalate dehydratase small subunit 1 (leuD1) of Thermotoga maritima (strain ATCC 43589 / DSM 3109 / JCM 10099 / NBRC 100826 / MSB8).